We begin with the raw amino-acid sequence, 175 residues long: B9 domain-containing protein 2 (175 aa).

In terms of domain architecture, C2 B9-type spans 2-118 (AEVHVIGQIM…DCPTWRPLGS (117 aa)).

Belongs to the B9D family. Part of the tectonic-like complex (also named B9 complex). Interacts with TUBG1.

The protein resides in the cytoplasm. It is found in the cytoskeleton. The protein localises to the cilium basal body. It localises to the cilium axoneme. Its subcellular location is the nucleus. Component of the tectonic-like complex, a complex localized at the transition zone of primary cilia and acting as a barrier that prevents diffusion of transmembrane proteins between the cilia and plasma membranes. This is B9 domain-containing protein 2 (B9D2) from Bos taurus (Bovine).